The sequence spans 89 residues: Small ribosomal subunit protein uS15 (89 aa).

It belongs to the universal ribosomal protein uS15 family. Part of the 30S ribosomal subunit. Forms a bridge to the 50S subunit in the 70S ribosome, contacting the 23S rRNA.

One of the primary rRNA binding proteins, it binds directly to 16S rRNA where it helps nucleate assembly of the platform of the 30S subunit by binding and bridging several RNA helices of the 16S rRNA. Its function is as follows. Forms an intersubunit bridge (bridge B4) with the 23S rRNA of the 50S subunit in the ribosome. This chain is Small ribosomal subunit protein uS15, found in Brucella abortus (strain S19).